The following is a 587-amino-acid chain: Hatching enzyme (587 aa).

Positions 1-18 (MANSGLILLVMFMIHVTT) are cleaved as a signal peptide. Residues 19–166 (VHNVPLPSTA…PRCGVPDVLP (148 aa)) constitute a propeptide, activation peptide. Residues asparagine 64, asparagine 126, and asparagine 141 are each glycosylated (N-linked (GlcNAc...) asparagine). The Cysteine switch motif lies at 157–164 (PRCGVPDV). The Zn(2+) site is built by cysteine 159 and histidine 283. Glutamate 284 is an active-site residue. 2 residues coordinate Zn(2+): histidine 287 and histidine 293. The disordered stretch occupies residues 325-382 (LYGSNSGSGTTTTTRRPTTTRATTTRRTTTTRATTTRATTTTTTSPSRPSPPRRACSG). The segment covering 334 to 371 (TTTTTRRPTTTRATTTRRTTTTRATTTRATTTTTTSPS) has biased composition (low complexity). An intrachain disulfide couples cysteine 380 to cysteine 582. Hemopexin repeat units lie at residues 381–422 (SGSF…RFGF), 425–468 (PQNI…WVGL), 469–513 (PCNI…FNDV), and 518–570 (HDGV…IPQC). The N-linked (GlcNAc...) asparagine glycan is linked to asparagine 584.

It belongs to the peptidase M10A family. Zn(2+) serves as cofactor.

It catalyses the reaction Hydrolysis of proteins of the fertilization envelope and dimethylcasein.. Allows the sea urchin to digest the protective envelope derived from the egg extracellular matrix; thus allowing the sea urchin to swim freely. The sequence is that of Hatching enzyme from Paracentrotus lividus (Common sea urchin).